A 208-amino-acid polypeptide reads, in one-letter code: ATP phosphoribosyltransferase (208 aa).

The protein belongs to the ATP phosphoribosyltransferase family. Short subfamily. Heteromultimer composed of HisG and HisZ subunits.

Its subcellular location is the cytoplasm. The catalysed reaction is 1-(5-phospho-beta-D-ribosyl)-ATP + diphosphate = 5-phospho-alpha-D-ribose 1-diphosphate + ATP. Its pathway is amino-acid biosynthesis; L-histidine biosynthesis; L-histidine from 5-phospho-alpha-D-ribose 1-diphosphate: step 1/9. In terms of biological role, catalyzes the condensation of ATP and 5-phosphoribose 1-diphosphate to form N'-(5'-phosphoribosyl)-ATP (PR-ATP). Has a crucial role in the pathway because the rate of histidine biosynthesis seems to be controlled primarily by regulation of HisG enzymatic activity. The protein is ATP phosphoribosyltransferase of Thermotoga neapolitana (strain ATCC 49049 / DSM 4359 / NBRC 107923 / NS-E).